A 410-amino-acid polypeptide reads, in one-letter code: MIRYFTAGESHGPALSAIVEGMPAGVALTESDINDQLARRQQGYGRGGRMKIETDRAEVLSGIRFGKTIGSPVAMVIRNRDWENWTVPMAQFDDNSAEVQKITIPRPGHADLTGFVKYGFDDIRPVIDRSSARETAARVAAGSLARAFLRQLGIQIGSYISTIGPVSEASAPAALPELLDAGAESLAAEADKSPVRMIDPATSEAAIAAIDQAKADGDTLGGIVEVYITGVPMGLGSYVQHDRRLDSALAAAIMSIQAIKGVEIGPAFDNARKPGSEVHDELFAGGEKGLRRKTNRAGGIEGSMSSGQPIHIRAAMKPISSLVSPLRSFDLATLEAVQSRFERSDTCAVPAAGIVAEAVVAPSSPTPCWKSSAEIIWRRLRKGWRLIGKRYEYALQGKKLRREPEVFAID.

NADP(+) is bound by residues R40 and R46. FMN is bound by residues 129–131, 257–258, G302, 317–321, and R343; these read RSS, QA, and KPISS.

This sequence belongs to the chorismate synthase family. Homotetramer. It depends on FMNH2 as a cofactor.

The catalysed reaction is 5-O-(1-carboxyvinyl)-3-phosphoshikimate = chorismate + phosphate. It functions in the pathway metabolic intermediate biosynthesis; chorismate biosynthesis; chorismate from D-erythrose 4-phosphate and phosphoenolpyruvate: step 7/7. Its function is as follows. Catalyzes the anti-1,4-elimination of the C-3 phosphate and the C-6 proR hydrogen from 5-enolpyruvylshikimate-3-phosphate (EPSP) to yield chorismate, which is the branch point compound that serves as the starting substrate for the three terminal pathways of aromatic amino acid biosynthesis. This reaction introduces a second double bond into the aromatic ring system. This Chlorobaculum parvum (strain DSM 263 / NCIMB 8327) (Chlorobium vibrioforme subsp. thiosulfatophilum) protein is Chorismate synthase.